A 188-amino-acid chain; its full sequence is Threonylcarbamoyl-AMP synthase (188 aa).

A YrdC-like domain is found at 3–188 (QLHPSEIKDI…RSGKILRNGQ (186 aa)).

Belongs to the SUA5 family. TsaC subfamily.

It localises to the cytoplasm. It carries out the reaction L-threonine + hydrogencarbonate + ATP = L-threonylcarbamoyladenylate + diphosphate + H2O. In terms of biological role, required for the formation of a threonylcarbamoyl group on adenosine at position 37 (t(6)A37) in tRNAs that read codons beginning with adenine. Catalyzes the conversion of L-threonine, HCO(3)(-)/CO(2) and ATP to give threonylcarbamoyl-AMP (TC-AMP) as the acyladenylate intermediate, with the release of diphosphate. In Shewanella sp. (strain MR-4), this protein is Threonylcarbamoyl-AMP synthase.